Here is a 449-residue protein sequence, read N- to C-terminus: UDP-N-acetylmuramate--L-alanine ligase (449 aa).

An ATP-binding site is contributed by 121 to 127; the sequence is GAHGKSS.

It belongs to the MurCDEF family.

The protein localises to the cytoplasm. The enzyme catalyses UDP-N-acetyl-alpha-D-muramate + L-alanine + ATP = UDP-N-acetyl-alpha-D-muramoyl-L-alanine + ADP + phosphate + H(+). It participates in cell wall biogenesis; peptidoglycan biosynthesis. Its function is as follows. Cell wall formation. This Helicobacter pylori (strain ATCC 700392 / 26695) (Campylobacter pylori) protein is UDP-N-acetylmuramate--L-alanine ligase.